A 265-amino-acid chain; its full sequence is MMQRSWQSWRRGLTLGLASRRSYVASVEAPSTPPEELDAFERDYLKQRIEITPFQKLLLGAGSSIASLLDPHRHDMIACLGETTGESALWNILDSMQATEEGRRILKDKPRINTKTIDFKRLEALPPNTFGATYAKFLKDNKVTPDSRMEVRFLEDPKLAYIMTRYRECHDLVHAALDMPTNMLCEVAVKWVEALNTGLPMCYGAAVFGAVRLRPRQRREYLKRYLPWAIENGKGMRPLMPIYWEQRWEQNIHELRCELGIKPLQ.

A mitochondrion-targeting transit peptide spans 1 to 30 (MMQRSWQSWRRGLTLGLASRRSYVASVEAP). Zn(2+) contacts are provided by H170, D171, H174, and E186.

Belongs to the COQ4 family. Component of a multi-subunit COQ enzyme complex. The cofactor is Zn(2+).

The protein resides in the mitochondrion inner membrane. It carries out the reaction a 4-hydroxy-3-methoxy-5-(all-trans-polyprenyl)benzoate + H(+) = a 2-methoxy-6-(all-trans-polyprenyl)phenol + CO2. It functions in the pathway cofactor biosynthesis; ubiquinone biosynthesis. Lyase that catalyzes the C1-decarboxylation of 4-hydroxy-3-methoxy-5-(all-trans-polyprenyl)benzoic acid into 2-methoxy-6-(all-trans-polyprenyl)phenol during ubiquinone biosynthesis. This is Ubiquinone biosynthesis protein COQ4 homolog, mitochondrial from Drosophila virilis (Fruit fly).